We begin with the raw amino-acid sequence, 428 residues long: tRNA modification GTPase MnmE (428 aa).

The (6S)-5-formyl-5,6,7,8-tetrahydrofolate site is built by arginine 20, glutamate 77, and lysine 117. One can recognise a TrmE-type G domain in the interval 213–351; sequence GFEVAIIGPP…LVQRISDVLK (139 aa). Asparagine 223 provides a ligand contact to K(+). GTP is bound by residues 223–228, 242–248, and 267–270; these read NAGKST, SEVAGTT, and DTAG. Residue serine 227 participates in Mg(2+) binding. K(+) contacts are provided by serine 242, valine 244, and threonine 247. Threonine 248 contributes to the Mg(2+) binding site. Lysine 428 contributes to the (6S)-5-formyl-5,6,7,8-tetrahydrofolate binding site.

The protein belongs to the TRAFAC class TrmE-Era-EngA-EngB-Septin-like GTPase superfamily. TrmE GTPase family. As to quaternary structure, homodimer. Heterotetramer of two MnmE and two MnmG subunits. K(+) is required as a cofactor.

The protein localises to the cytoplasm. Its function is as follows. Exhibits a very high intrinsic GTPase hydrolysis rate. Involved in the addition of a carboxymethylaminomethyl (cmnm) group at the wobble position (U34) of certain tRNAs, forming tRNA-cmnm(5)s(2)U34. The chain is tRNA modification GTPase MnmE from Ruegeria pomeroyi (strain ATCC 700808 / DSM 15171 / DSS-3) (Silicibacter pomeroyi).